A 523-amino-acid polypeptide reads, in one-letter code: Lysine--tRNA ligase (523 aa).

The 'HIGH' region motif lies at 30 to 38 (PSGYVHVGN). D95, C99, H100, H106, C177, H180, C199, and H203 together coordinate Zn(2+). The short motif at 279-283 (KMSGS) is the 'KMSKS' region element.

The protein belongs to the class-I aminoacyl-tRNA synthetase family. It depends on Zn(2+) as a cofactor.

Its subcellular location is the cytoplasm. It catalyses the reaction tRNA(Lys) + L-lysine + ATP = L-lysyl-tRNA(Lys) + AMP + diphosphate. This Pyrococcus horikoshii (strain ATCC 700860 / DSM 12428 / JCM 9974 / NBRC 100139 / OT-3) protein is Lysine--tRNA ligase (lysS).